Consider the following 798-residue polypeptide: Exo-1,4-beta-xylosidase xlnD (798 aa).

The first 20 residues, 1–20 (MPGAASIVAVLAALLPTALG), serve as a signal peptide directing secretion. 4 N-linked (GlcNAc...) asparagine glycosylation sites follow: Asn23, Asn87, Asn142, and Asn237. Asp310 is a catalytic residue. N-linked (GlcNAc...) asparagine glycans are attached at residues Asn326, Asn391, Asn404, Asn443, Asn480, Asn522, Asn618, Asn645, Asn658, Asn685, and Asn707.

It belongs to the glycosyl hydrolase 3 family.

The protein localises to the secreted. It carries out the reaction Hydrolysis of (1-&gt;4)-beta-D-xylans, to remove successive D-xylose residues from the non-reducing termini.. It participates in glycan degradation; xylan degradation. Its function is as follows. Xylan 1,4-beta-xylosidase involved in the hydrolysis of xylan, a major structural heterogeneous polysaccharide found in plant biomass representing the second most abundant polysaccharide in the biosphere, after cellulose. This Aspergillus oryzae (strain ATCC 42149 / RIB 40) (Yellow koji mold) protein is Exo-1,4-beta-xylosidase xlnD (xlnD).